Consider the following 418-residue polypeptide: Light-independent protochlorophyllide reductase subunit N (418 aa).

Positions 17, 42, and 103 each coordinate [4Fe-4S] cluster.

This sequence belongs to the BchN/ChlN family. Protochlorophyllide reductase is composed of three subunits; ChlL, ChlN and ChlB. Forms a heterotetramer of two ChlB and two ChlN subunits. Requires [4Fe-4S] cluster as cofactor.

The enzyme catalyses chlorophyllide a + oxidized 2[4Fe-4S]-[ferredoxin] + 2 ADP + 2 phosphate = protochlorophyllide a + reduced 2[4Fe-4S]-[ferredoxin] + 2 ATP + 2 H2O. It participates in porphyrin-containing compound metabolism; chlorophyll biosynthesis (light-independent). In terms of biological role, component of the dark-operative protochlorophyllide reductase (DPOR) that uses Mg-ATP and reduced ferredoxin to reduce ring D of protochlorophyllide (Pchlide) to form chlorophyllide a (Chlide). This reaction is light-independent. The NB-protein (ChlN-ChlB) is the catalytic component of the complex. This is Light-independent protochlorophyllide reductase subunit N from Prochlorococcus marinus (strain MIT 9515).